The following is a 565-amino-acid chain: E3 ubiquitin-protein ligase RNF168 (565 aa).

The segment at 16–55 (CGICMEILLEPVTLPCNHTLCNPCFQSTVEKANLCCPFCR) adopts an RING-type zinc-finger fold. Ser70 bears the Phosphoserine mark. The short motif at 110–128 (LSEPGELRREYEEEISRVE) is the LR motif 1 element. Ser134 carries the phosphoserine modification. A UMI motif motif is present at residues 143-151 (EEYIQRLLA). 2 disordered regions span residues 150-223 (LAEE…KTFG) and 252-302 (SKET…PQLC). Residues 157 to 179 (EKRQREKRRSEMEEQLRGDEELA) show a composition bias toward basic and acidic residues. The MIU motif 1 motif lies at 168 to 191 (MEEQLRGDEELARSLSTSINSNYE). The segment covering 181 to 201 (SLSTSINSNYERNTLASPLSS) has biased composition (polar residues). Ser197 carries the post-translational modification Phosphoserine. Lys210 is covalently cross-linked (Glycyl lysine isopeptide (Lys-Gly) (interchain with G-Cter in SUMO2)). The segment covering 275–293 (PTLSPQTCLETQEQGSESS) has biased composition (polar residues). Ser413 and Ser414 each carry phosphoserine. The MIU motif 2 motif lies at 438 to 461 (RHKQEEQDRLLALQLQKEVDKEQM). Residues 458–521 (KEQMVPNRQK…TKGDYWEPFK (64 aa)) are disordered. An LR motif 2 motif is present at residues 465–476 (RQKGSPDQYQLR). Positions 466–477 (QKGSPDQYQLRT) are enriched in polar residues. Residue Ser469 is modified to Phosphoserine. A compositionally biased stretch (basic and acidic residues) spans 504–518 (DHSKSPRNTKGDYWE). Lys525 participates in a covalent cross-link: Glycyl lysine isopeptide (Lys-Gly) (interchain with G-Cter in SUMO2).

Belongs to the RNF168 family. In terms of assembly, monomer. Interacts with UBE2N/UBC13. In terms of processing, sumoylated with SUMO1 by PIAS4 in response to double-strand breaks (DSBs). Post-translationally, ubiquitinated.

It is found in the nucleus. It carries out the reaction S-ubiquitinyl-[E2 ubiquitin-conjugating enzyme]-L-cysteine + [acceptor protein]-L-lysine = [E2 ubiquitin-conjugating enzyme]-L-cysteine + N(6)-ubiquitinyl-[acceptor protein]-L-lysine.. It functions in the pathway protein modification; protein ubiquitination. E3 ubiquitin-protein ligase required for accumulation of repair proteins to sites of DNA damage. Acts with UBE2N/UBC13 to amplify the RNF8-dependent histone ubiquitination. Recruited to sites of DNA damage at double-strand breaks (DSBs) by binding to ubiquitinated histone H2A and H2AX and amplifies the RNF8-dependent H2A ubiquitination, promoting the formation of 'Lys-63'-linked ubiquitin conjugates. This leads to concentrate ubiquitinated histones H2A and H2AX at DNA lesions to the threshold required for recruitment of TP53BP1 and BRCA1. Also recruited at DNA interstrand cross-links (ICLs) sites and promotes accumulation of 'Lys-63'-linked ubiquitination of histones H2A and H2AX, leading to recruitment of FAAP20 and Fanconi anemia (FA) complex, followed by interstrand cross-link repair. H2A ubiquitination also mediates the ATM-dependent transcriptional silencing at regions flanking DSBs in cis, a mechanism to avoid collision between transcription and repair intermediates. Also involved in class switch recombination in immune system, via its role in regulation of DSBs repair. Following DNA damage, promotes the ubiquitination and degradation of JMJD2A/KDM4A in collaboration with RNF8, leading to unmask H4K20me2 mark and promote the recruitment of TP53BP1 at DNA damage sites. Not able to initiate 'Lys-63'-linked ubiquitination in vitro; possibly due to partial occlusion of the UBE2N/UBC13-binding region. Catalyzes monoubiquitination of 'Lys-13' and 'Lys-15' of nucleosomal histone H2A (H2AK13Ub and H2AK15Ub, respectively). The sequence is that of E3 ubiquitin-protein ligase RNF168 from Mus musculus (Mouse).